The chain runs to 207 residues: Large ribosomal subunit protein uL3 (207 aa).

The disordered stretch occupies residues 126 to 149; the sequence is GPASHGSKKWHRRPGSIGQRKTPG.

It belongs to the universal ribosomal protein uL3 family. Part of the 50S ribosomal subunit. Forms a cluster with proteins L14 and L19.

In terms of biological role, one of the primary rRNA binding proteins, it binds directly near the 3'-end of the 23S rRNA, where it nucleates assembly of the 50S subunit. This Deinococcus geothermalis (strain DSM 11300 / CIP 105573 / AG-3a) protein is Large ribosomal subunit protein uL3.